We begin with the raw amino-acid sequence, 146 residues long: Glycosylation-dependent cell adhesion molecule 1 (146 aa).

Residues 1–19 (MKFFTVLLFASLAATSLAA) form the signal peptide. Positions 25-112 (DELHLRTQPT…SAATSEGKLT (88 aa)) are disordered. Positions 48–60 (ISKESTSSKDLSK) are enriched in basic and acidic residues. 3 positions are modified to phosphoserine: S54, S59, and S71. Residues 74 to 106 (NVGTESTKPQSQEAQDGLRSGSSQQEETTSAAT) show a composition bias toward polar residues.

Belongs to the PP3/GlyCAM-1 family. Extensively O-glycosylated. Lymph nodes. Associated with the lumenal surface of the high endothelial venules of peripheral lymph nodes.

The protein localises to the cell membrane. Its function is as follows. Adhesion molecule that accomplishes cell binding by presenting carbohydrate(s) to the lectin domain of L-selectin. This chain is Glycosylation-dependent cell adhesion molecule 1 (Glycam1), found in Rattus norvegicus (Rat).